The chain runs to 700 residues: ATP-dependent zinc metalloprotease FtsH (700 aa).

Residues 1-20 (MSSDNGSGRQGGDRGGSTGY) lie on the Cytoplasmic side of the membrane. A helical transmembrane segment spans residues 21–41 (NLLMYLGFGAIIATLVALYVL). Residues 42 to 171 (QMFQTSLDYT…FRHADPPGPW (130 aa)) lie on the Periplasmic side of the membrane. A helical transmembrane segment spans residues 172-192 (EQHSQLIIGMLLAAMLIYIVV). Over 193-700 (RRLSAAGSPM…ITAPATERSG (508 aa)) the chain is Cytoplasmic. Residue 262 to 269 (GPPGTGKT) participates in ATP binding. His484 is a Zn(2+) binding site. Residue Glu485 is part of the active site. Residues His488 and Asp561 each contribute to the Zn(2+) site.

In the central section; belongs to the AAA ATPase family. The protein in the C-terminal section; belongs to the peptidase M41 family. As to quaternary structure, homohexamer. Zn(2+) is required as a cofactor.

The protein resides in the cell inner membrane. Acts as a processive, ATP-dependent zinc metallopeptidase for both cytoplasmic and membrane proteins. Plays a role in the quality control of integral membrane proteins. This Pirellula staleyi (strain ATCC 27377 / DSM 6068 / ICPB 4128) (Pirella staleyi) protein is ATP-dependent zinc metalloprotease FtsH.